Here is a 457-residue protein sequence, read N- to C-terminus: Argininosuccinate lyase (457 aa).

This sequence belongs to the lyase 1 family. Argininosuccinate lyase subfamily.

The protein localises to the cytoplasm. It catalyses the reaction 2-(N(omega)-L-arginino)succinate = fumarate + L-arginine. It participates in amino-acid biosynthesis; L-arginine biosynthesis; L-arginine from L-ornithine and carbamoyl phosphate: step 3/3. The protein is Argininosuccinate lyase of Yersinia pseudotuberculosis serotype O:1b (strain IP 31758).